Here is a 737-residue protein sequence, read N- to C-terminus: Catalase-peroxidase (737 aa).

Residues 1–32 are disordered; it reads MSKENMSNEGKCPFNHGAAGTNQSSGRGTSNK. Over residues 20–32 the composition is skewed to polar residues; sequence GTNQSSGRGTSNK. The segment at residues 103–226 is a cross-link (tryptophyl-tyrosyl-methioninium (Trp-Tyr) (with M-252)); the sequence is WHSAGTYRTA…LAAVQMGLIY (124 aa). The Proton acceptor role is filled by H104. The segment at residues 226–252 is a cross-link (tryptophyl-tyrosyl-methioninium (Tyr-Met) (with W-103)); sequence YVNPEGPEGKPDTLASARDIRDTFGRM. Residue H267 participates in heme b binding.

This sequence belongs to the peroxidase family. Peroxidase/catalase subfamily. In terms of assembly, homodimer or homotetramer. It depends on heme b as a cofactor. In terms of processing, formation of the three residue Trp-Tyr-Met cross-link is important for the catalase, but not the peroxidase activity of the enzyme.

The enzyme catalyses H2O2 + AH2 = A + 2 H2O. The catalysed reaction is 2 H2O2 = O2 + 2 H2O. Functionally, bifunctional enzyme with both catalase and broad-spectrum peroxidase activity. This Marinomonas sp. (strain MWYL1) protein is Catalase-peroxidase.